Consider the following 348-residue polypeptide: MKFNEISEKLSPLVTNSSLTTHPDLNPDITAVAAVDEAVTGQLSYIEGGKFAAMVQKTAASALILPRDEALQAQATEKDIAWITTPEPRLLFAHAIKLFYQPFHPSPGIHPTAVIDSSVKLGKDIYIGPHVVIEQGVTIGDNACIHANVVIYPGVSIGDRTILHANCTIHERSQIGDNCVIHSGAAIGSEGFGFVPTPDGWFKMEQSGYVVLEDGVEIGCNSAVDRPAVGTTRVGRNTKIDNLVQVAHNCQISENCVFASQVGLAGGVKVGKRVILAGQVGVANQANIGDGVIASAQTGIPHDIAPGEIVSSSPAVPNKLYLKASAIYKRLPEMYQTLKRLQKKLEES.

His248 acts as the Proton acceptor in catalysis.

This sequence belongs to the transferase hexapeptide repeat family. LpxD subfamily. In terms of assembly, homotrimer.

It carries out the reaction a UDP-3-O-[(3R)-3-hydroxyacyl]-alpha-D-glucosamine + a (3R)-hydroxyacyl-[ACP] = a UDP-2-N,3-O-bis[(3R)-3-hydroxyacyl]-alpha-D-glucosamine + holo-[ACP] + H(+). Its pathway is bacterial outer membrane biogenesis; LPS lipid A biosynthesis. In terms of biological role, catalyzes the N-acylation of UDP-3-O-acylglucosamine using 3-hydroxyacyl-ACP as the acyl donor. Is involved in the biosynthesis of lipid A, a phosphorylated glycolipid that anchors the lipopolysaccharide to the outer membrane of the cell. This is UDP-3-O-acylglucosamine N-acyltransferase from Rippkaea orientalis (strain PCC 8801 / RF-1) (Cyanothece sp. (strain PCC 8801)).